A 120-amino-acid chain; its full sequence is uncharacterized protein (120 aa).

N-linked (GlcNAc...) asparagine; by host glycosylation is found at asparagine 29 and asparagine 68. Residues 74 to 94 form a helical membrane-spanning segment; it reads IFNGLGFILIVIFIYLLIITL.

This sequence belongs to the asfivirus B117L family.

The protein localises to the host membrane. The protein resides in the virion. This is an uncharacterized protein from Ornithodoros (relapsing fever ticks).